A 110-amino-acid polypeptide reads, in one-letter code: uncharacterized protein (110 aa).

A disordered region spans residues 38 to 62 (SVQQNARAEEAEAAAPPAEEDSLPD).

This is an uncharacterized protein from Mus musculus (Mouse).